The sequence spans 314 residues: Olfactory receptor 5P72 (314 aa).

Topologically, residues methionine 1–valine 28 are extracellular. N-linked (GlcNAc...) asparagine glycosylation is present at asparagine 8. Residues valine 29–isoleucine 49 form a helical membrane-spanning segment. Residues leucine 50–glutamine 57 lie on the Cytoplasmic side of the membrane. A helical membrane pass occupies residues leucine 58–serine 78. Topologically, residues serine 79–isoleucine 102 are extracellular. Cysteine 100 and cysteine 192 are oxidised to a cystine. Residues glutamine 103–tyrosine 123 traverse the membrane as a helical segment. Topologically, residues aspartate 124–serine 136 are cytoplasmic. The chain crosses the membrane as a helical span at residues threonine 137–leucine 157. The Extracellular portion of the chain corresponds to asparagine 158–valine 199. The chain crosses the membrane as a helical span at residues isoleucine 200 to serine 220. At tyrosine 221–alanine 240 the chain is on the cytoplasmic side. A helical membrane pass occupies residues phenylalanine 241–isoleucine 261. At tyrosine 262 to asparagine 274 the chain is on the extracellular side. A helical membrane pass occupies residues lysine 275–leucine 295. Residues arginine 296–cysteine 314 are Cytoplasmic-facing.

The protein belongs to the G-protein coupled receptor 1 family.

Its subcellular location is the cell membrane. Functionally, potential odorant receptor. The sequence is that of Olfactory receptor 5P72 from Mus musculus (Mouse).